We begin with the raw amino-acid sequence, 278 residues long: Indole-3-glycerol phosphate synthase (278 aa).

It belongs to the TrpC family.

The catalysed reaction is 1-(2-carboxyphenylamino)-1-deoxy-D-ribulose 5-phosphate + H(+) = (1S,2R)-1-C-(indol-3-yl)glycerol 3-phosphate + CO2 + H2O. It functions in the pathway amino-acid biosynthesis; L-tryptophan biosynthesis; L-tryptophan from chorismate: step 4/5. The protein is Indole-3-glycerol phosphate synthase of Pseudomonas fluorescens (strain SBW25).